The sequence spans 341 residues: UDP-3-O-acylglucosamine N-acyltransferase 2 (341 aa).

Residue His-254 is the Proton acceptor of the active site.

The protein belongs to the transferase hexapeptide repeat family. LpxD subfamily. As to quaternary structure, homotrimer.

It carries out the reaction a UDP-3-O-[(3R)-3-hydroxyacyl]-alpha-D-glucosamine + a (3R)-hydroxyacyl-[ACP] = a UDP-2-N,3-O-bis[(3R)-3-hydroxyacyl]-alpha-D-glucosamine + holo-[ACP] + H(+). It participates in bacterial outer membrane biogenesis; LPS lipid A biosynthesis. Its function is as follows. Catalyzes the N-acylation of UDP-3-O-acylglucosamine using 3-hydroxyacyl-ACP as the acyl donor. Is involved in the biosynthesis of lipid A, a phosphorylated glycolipid that anchors the lipopolysaccharide to the outer membrane of the cell. The sequence is that of UDP-3-O-acylglucosamine N-acyltransferase 2 from Nitrobacter winogradskyi (strain ATCC 25391 / DSM 10237 / CIP 104748 / NCIMB 11846 / Nb-255).